A 134-amino-acid chain; its full sequence is MSWQTYVDDHLMCDIEDHEGHRLTAAAIVGHDGSVWAQSATFPQFKPEEMNGIMTDFNEPGHLAPTGLHLGGTKYMVIQGEAGAVIRGKKGSGGITIKKTGQALVCGIYEEPVTPGQCNMVVERLGDYLLEQGL.

Cys-13 and Cys-118 form a disulfide bridge. The Involved in PIP2 interaction motif lies at 84 to 100 (AVIRGKKGSGGITIKKT). Thr-114 is modified (phosphothreonine).

This sequence belongs to the profilin family. In terms of assembly, occurs in many kinds of cells as a complex with monomeric actin in a 1:1 ratio. In terms of processing, phosphorylated by MAP kinases.

The protein localises to the cytoplasm. Its subcellular location is the cytoskeleton. In terms of biological role, binds to actin and affects the structure of the cytoskeleton. At high concentrations, profilin prevents the polymerization of actin, whereas it enhances it at low concentrations. The polypeptide is Profilin-3 (Olea europaea (Common olive)).